The following is a 132-amino-acid chain: MDSRTGENITAHQAENSVFIWEVPNPLYFKIMRVEDPAYTRTRIYHIQVRFNHNLRKALDLHKAFLNFQVWTTSIQASGTTYLNRFRLLVLLYLHRLGVIGINNVIRAVQFATNKSYVNTVLENHDIKYKFY.

Belongs to the geminiviridae replication enhancer protein family. Homooligomer. Interacts with the replication-associated protein (REP). Interacts with host proliferating cell nuclear antigen (PCNA). Interacts with host retinoblastoma-related protein 1 (RBR1), and may thereby deregulate the host cell cycle. Oligomerization and interaction with PCNA are necessary for optimal replication enhancement.

Increases viral DNA accumulation. Enhances infectivity and symptom expression. The protein is Replication enhancer protein of Macroptilium lathyroides (Lima bean).